Reading from the N-terminus, the 147-residue chain is Large ribosomal subunit protein uL13 (147 aa).

Belongs to the universal ribosomal protein uL13 family. Part of the 50S ribosomal subunit.

In terms of biological role, this protein is one of the early assembly proteins of the 50S ribosomal subunit, although it is not seen to bind rRNA by itself. It is important during the early stages of 50S assembly. This is Large ribosomal subunit protein uL13 from Latilactobacillus sakei subsp. sakei (strain 23K) (Lactobacillus sakei subsp. sakei).